The primary structure comprises 206 residues: Thiamine-phosphate synthase (206 aa).

4-amino-2-methyl-5-(diphosphooxymethyl)pyrimidine-binding positions include 33–37 (QMRFK) and asparagine 65. Aspartate 66 and aspartate 85 together coordinate Mg(2+). 4-amino-2-methyl-5-(diphosphooxymethyl)pyrimidine is bound at residue threonine 104. 130-132 (TAT) lines the 2-[(2R,5Z)-2-carboxy-4-methylthiazol-5(2H)-ylidene]ethyl phosphate pocket. A 4-amino-2-methyl-5-(diphosphooxymethyl)pyrimidine-binding site is contributed by lysine 133. Glycine 166 serves as a coordination point for 2-[(2R,5Z)-2-carboxy-4-methylthiazol-5(2H)-ylidene]ethyl phosphate.

The protein belongs to the thiamine-phosphate synthase family. Requires Mg(2+) as cofactor.

It catalyses the reaction 2-[(2R,5Z)-2-carboxy-4-methylthiazol-5(2H)-ylidene]ethyl phosphate + 4-amino-2-methyl-5-(diphosphooxymethyl)pyrimidine + 2 H(+) = thiamine phosphate + CO2 + diphosphate. The enzyme catalyses 2-(2-carboxy-4-methylthiazol-5-yl)ethyl phosphate + 4-amino-2-methyl-5-(diphosphooxymethyl)pyrimidine + 2 H(+) = thiamine phosphate + CO2 + diphosphate. It carries out the reaction 4-methyl-5-(2-phosphooxyethyl)-thiazole + 4-amino-2-methyl-5-(diphosphooxymethyl)pyrimidine + H(+) = thiamine phosphate + diphosphate. It participates in cofactor biosynthesis; thiamine diphosphate biosynthesis; thiamine phosphate from 4-amino-2-methyl-5-diphosphomethylpyrimidine and 4-methyl-5-(2-phosphoethyl)-thiazole: step 1/1. Condenses 4-methyl-5-(beta-hydroxyethyl)thiazole monophosphate (THZ-P) and 2-methyl-4-amino-5-hydroxymethyl pyrimidine pyrophosphate (HMP-PP) to form thiamine monophosphate (TMP). The chain is Thiamine-phosphate synthase from Flavobacterium psychrophilum (strain ATCC 49511 / DSM 21280 / CIP 103535 / JIP02/86).